Reading from the N-terminus, the 342-residue chain is MTNSLFRQSFLSDTLNMQQSVEAKATTLSNGVRLQLHQRGVLEVIPANNSAETKNIILSSGIHGDETAPMELIDKIVHDIETGFQDVQARCLFIIAHPEATNAHTRFIEENLNRLFDEKEHQPSKELVIADQLKLLVKAFFDNTPVESRWHLDLHCAIRASKHYSFAISPKTRHPTRSKALVDFVNHSHVEALLLSNSPSSTFSWFSAEYYSAQALTMELGRVARIGENELERFTALDLTMRDLIAEVTPEHLPKPAITYRVSRTIVRLHQDFDFRFDDQVENFTSFMHGEVFGHDGDKPLMAKNDNEAIVFPNRNVAIGQRAALMVCEVKARFEDDQLVYD.

3 residues coordinate Zn(2+): His63, Glu66, and His155. Glu219 is an active-site residue.

The protein belongs to the AspA/AstE family. Succinylglutamate desuccinylase subfamily. Requires Zn(2+) as cofactor.

It carries out the reaction N-succinyl-L-glutamate + H2O = L-glutamate + succinate. The protein operates within amino-acid degradation; L-arginine degradation via AST pathway; L-glutamate and succinate from L-arginine: step 5/5. In terms of biological role, transforms N(2)-succinylglutamate into succinate and glutamate. This is Succinylglutamate desuccinylase from Vibrio vulnificus (strain CMCP6).